A 317-amino-acid chain; its full sequence is Methionyl-tRNA formyltransferase (317 aa).

113 to 116 (SLLP) contributes to the (6S)-5,6,7,8-tetrahydrofolate binding site.

It belongs to the Fmt family.

The enzyme catalyses L-methionyl-tRNA(fMet) + (6R)-10-formyltetrahydrofolate = N-formyl-L-methionyl-tRNA(fMet) + (6S)-5,6,7,8-tetrahydrofolate + H(+). Attaches a formyl group to the free amino group of methionyl-tRNA(fMet). The formyl group appears to play a dual role in the initiator identity of N-formylmethionyl-tRNA by promoting its recognition by IF2 and preventing the misappropriation of this tRNA by the elongation apparatus. The sequence is that of Methionyl-tRNA formyltransferase from Pseudomonas fluorescens (strain SBW25).